The primary structure comprises 139 residues: Nucleoside diphosphate kinase (139 aa).

Residues Lys10, Phe58, Arg86, Thr92, Arg103, and Asn113 each contribute to the ATP site. His116 serves as the catalytic Pros-phosphohistidine intermediate.

It belongs to the NDK family. In terms of assembly, homotetramer. Mg(2+) is required as a cofactor.

It localises to the cytoplasm. The enzyme catalyses a 2'-deoxyribonucleoside 5'-diphosphate + ATP = a 2'-deoxyribonucleoside 5'-triphosphate + ADP. It carries out the reaction a ribonucleoside 5'-diphosphate + ATP = a ribonucleoside 5'-triphosphate + ADP. Major role in the synthesis of nucleoside triphosphates other than ATP. The ATP gamma phosphate is transferred to the NDP beta phosphate via a ping-pong mechanism, using a phosphorylated active-site intermediate. This chain is Nucleoside diphosphate kinase, found in Oleidesulfovibrio alaskensis (strain ATCC BAA-1058 / DSM 17464 / G20) (Desulfovibrio alaskensis).